The sequence spans 507 residues: Prolyl carboxy peptidase like protein 5 (507 aa).

Residues 1-16 form the signal peptide; the sequence is MNIFISLAILIATTHC. The N-linked (GlcNAc...) asparagine glycan is linked to Asn-125. Ser-172 functions as the Charge relay system in the catalytic mechanism. Residues Asn-332 and Asn-407 are each glycosylated (N-linked (GlcNAc...) asparagine). Catalysis depends on charge relay system residues Asp-439 and His-466.

It belongs to the peptidase S28 family.

This is Prolyl carboxy peptidase like protein 5 from Caenorhabditis elegans.